Here is a 303-residue protein sequence, read N- to C-terminus: Protoheme IX farnesyltransferase (303 aa).

9 helical membrane-spanning segments follow: residues 17–37, 42–62, 91–111, 114–134, 142–162, 168–188, 208–228, 231–251, and 270–290; these read GVVM…TEPA, LATF…SAAI, AAIT…YFLV, LTAW…TLYL, IVIG…AVTG, AWLL…ALAI, IPFT…CTLL, LTGM…LVFL, and FGYS…DHYL.

The protein belongs to the UbiA prenyltransferase family. Protoheme IX farnesyltransferase subfamily.

Its subcellular location is the cell inner membrane. It catalyses the reaction heme b + (2E,6E)-farnesyl diphosphate + H2O = Fe(II)-heme o + diphosphate. It functions in the pathway porphyrin-containing compound metabolism; heme O biosynthesis; heme O from protoheme: step 1/1. Converts heme B (protoheme IX) to heme O by substitution of the vinyl group on carbon 2 of heme B porphyrin ring with a hydroxyethyl farnesyl side group. In Alcanivorax borkumensis (strain ATCC 700651 / DSM 11573 / NCIMB 13689 / SK2), this protein is Protoheme IX farnesyltransferase.